The chain runs to 312 residues: tRNA dimethylallyltransferase (312 aa).

11 to 18 contributes to the ATP binding site; the sequence is GATATGKT. Substrate is bound at residue 13–18; the sequence is TATGKT. The interval 36 to 39 is interaction with substrate tRNA; it reads DSRQ.

This sequence belongs to the IPP transferase family. As to quaternary structure, monomer. Mg(2+) serves as cofactor.

The catalysed reaction is adenosine(37) in tRNA + dimethylallyl diphosphate = N(6)-dimethylallyladenosine(37) in tRNA + diphosphate. Functionally, catalyzes the transfer of a dimethylallyl group onto the adenine at position 37 in tRNAs that read codons beginning with uridine, leading to the formation of N6-(dimethylallyl)adenosine (i(6)A). This Thermosynechococcus vestitus (strain NIES-2133 / IAM M-273 / BP-1) protein is tRNA dimethylallyltransferase.